The primary structure comprises 346 residues: Phosphate acyltransferase (346 aa).

Belongs to the PlsX family. Homodimer. Probably interacts with PlsY.

The protein localises to the cytoplasm. The catalysed reaction is a fatty acyl-[ACP] + phosphate = an acyl phosphate + holo-[ACP]. It functions in the pathway lipid metabolism; phospholipid metabolism. Catalyzes the reversible formation of acyl-phosphate (acyl-PO(4)) from acyl-[acyl-carrier-protein] (acyl-ACP). This enzyme utilizes acyl-ACP as fatty acyl donor, but not acyl-CoA. The polypeptide is Phosphate acyltransferase (Crocosphaera subtropica (strain ATCC 51142 / BH68) (Cyanothece sp. (strain ATCC 51142))).